We begin with the raw amino-acid sequence, 372 residues long: tRNA-specific 2-thiouridylase MnmA (372 aa).

ATP is bound by residues 11-18 (GMSGGVDS) and Met-37. The segment at 97 to 99 (NPD) is interaction with target base in tRNA. The active-site Nucleophile is the Cys-102. An intrachain disulfide couples Cys-102 to Cys-199. Residue Gly-126 coordinates ATP. An interaction with tRNA region spans residues 149-151 (KDQ). Cys-199 acts as the Cysteine persulfide intermediate in catalysis. The interaction with tRNA stretch occupies residues 309–310 (RY).

Belongs to the MnmA/TRMU family.

The protein resides in the cytoplasm. The enzyme catalyses S-sulfanyl-L-cysteinyl-[protein] + uridine(34) in tRNA + AH2 + ATP = 2-thiouridine(34) in tRNA + L-cysteinyl-[protein] + A + AMP + diphosphate + H(+). Functionally, catalyzes the 2-thiolation of uridine at the wobble position (U34) of tRNA, leading to the formation of s(2)U34. This is tRNA-specific 2-thiouridylase MnmA from Staphylococcus aureus (strain bovine RF122 / ET3-1).